A 243-amino-acid polypeptide reads, in one-letter code: Ribonuclease PH (243 aa).

Residues Arg-84 and 122 to 124 (GTR) each bind phosphate.

It belongs to the RNase PH family. Homohexameric ring arranged as a trimer of dimers.

It carries out the reaction tRNA(n+1) + phosphate = tRNA(n) + a ribonucleoside 5'-diphosphate. Phosphorolytic 3'-5' exoribonuclease that plays an important role in tRNA 3'-end maturation. Removes nucleotide residues following the 3'-CCA terminus of tRNAs; can also add nucleotides to the ends of RNA molecules by using nucleoside diphosphates as substrates, but this may not be physiologically important. Probably plays a role in initiation of 16S rRNA degradation (leading to ribosome degradation) during starvation. The chain is Ribonuclease PH from Bdellovibrio bacteriovorus (strain ATCC 15356 / DSM 50701 / NCIMB 9529 / HD100).